The primary structure comprises 218 residues: N-(5'-phosphoribosyl)anthranilate isomerase (218 aa).

The protein belongs to the TrpF family.

It catalyses the reaction N-(5-phospho-beta-D-ribosyl)anthranilate = 1-(2-carboxyphenylamino)-1-deoxy-D-ribulose 5-phosphate. The protein operates within amino-acid biosynthesis; L-tryptophan biosynthesis; L-tryptophan from chorismate: step 3/5. In Halobacterium salinarum (strain ATCC 29341 / DSM 671 / R1), this protein is N-(5'-phosphoribosyl)anthranilate isomerase.